Reading from the N-terminus, the 401-residue chain is MTETAPWTTRKPTAMLVLADGTVIEGTGIGATGKVQAEVCFNTALTGYEEILTDPSYLGQIVTFTFPHIGNVGTNEEDIEDLTPAARRGAVGVIFKADITDPSNFRAVKHLDAWLKARGVIGLCGIDTRALTAWIRENGAPNAVIAHDPNGVFDIEALKAEAKAWSGLVGLDLAIEATSGQSSTWTETPWVWNKGYGTLGEADAKYHVVCVDFGVKRNILRLFAGLDCKVTVVPAQTSAEDILALKPDGVFLSNGPGDPAATGEYAVPVIQNLIKSELPIFGICLGHQMLGLAVGAKTEKMHQGHHGANHPVKDFTTGKVEIVSMNHGFAVDTKSLPEGVEETHTSLFDGTNCGLRIVGKPVFSVQHHPEASPGPQDSHYLFRRFVNLLRENKGEAALAER.

The segment at 1-203 (MTETAPWTTR…KGYGTLGEAD (203 aa)) is CPSase. Serine 56, glycine 255, and glycine 257 together coordinate L-glutamine. The region spanning 207 to 395 (HVVCVDFGVK…VNLLRENKGE (189 aa)) is the Glutamine amidotransferase type-1 domain. The active-site Nucleophile is cysteine 284. The L-glutamine site is built by leucine 285, glutamine 288, asparagine 326, glycine 328, and phenylalanine 329. Residues histidine 368 and glutamate 370 contribute to the active site.

This sequence belongs to the CarA family. In terms of assembly, composed of two chains; the small (or glutamine) chain promotes the hydrolysis of glutamine to ammonia, which is used by the large (or ammonia) chain to synthesize carbamoyl phosphate. Tetramer of heterodimers (alpha,beta)4.

It carries out the reaction hydrogencarbonate + L-glutamine + 2 ATP + H2O = carbamoyl phosphate + L-glutamate + 2 ADP + phosphate + 2 H(+). It catalyses the reaction L-glutamine + H2O = L-glutamate + NH4(+). It participates in amino-acid biosynthesis; L-arginine biosynthesis; carbamoyl phosphate from bicarbonate: step 1/1. The protein operates within pyrimidine metabolism; UMP biosynthesis via de novo pathway; (S)-dihydroorotate from bicarbonate: step 1/3. Small subunit of the glutamine-dependent carbamoyl phosphate synthetase (CPSase). CPSase catalyzes the formation of carbamoyl phosphate from the ammonia moiety of glutamine, carbonate, and phosphate donated by ATP, constituting the first step of 2 biosynthetic pathways, one leading to arginine and/or urea and the other to pyrimidine nucleotides. The small subunit (glutamine amidotransferase) binds and cleaves glutamine to supply the large subunit with the substrate ammonia. The protein is Carbamoyl phosphate synthase small chain of Agrobacterium fabrum (strain C58 / ATCC 33970) (Agrobacterium tumefaciens (strain C58)).